We begin with the raw amino-acid sequence, 595 residues long: Epsin-2 (595 aa).

A 1,2-diacyl-sn-glycero-3-phospho-(1D-myo-inositol-4,5-bisphosphate) is bound by residues Arg-8, Lys-11, Arg-25, Asn-30, Arg-63, and His-73. Residues 12-144 (NIVNNYSEAE…KDEERLKVER (133 aa)) enclose the ENTH domain. Over residues 164–183 (NQITFGRGSSQPNLSTSYSE) the composition is skewed to polar residues. Disordered stretches follow at residues 164–254 (NQIT…RLRR), 267–289 (SRRD…PGSH), 305–396 (SGPV…KPSS), and 423–469 (TSKK…PESF). Position 170 is an omega-N-methylarginine (Arg-170). Residues Ser-173, Ser-192, and Ser-195 each carry the phosphoserine modification. Composition is skewed to polar residues over residues 197–216 (HGST…PQTS) and 235–245 (EQSSESVQTAR). 2 consecutive UIM domains span residues 218-237 (EEEL…AEQS) and 255-274 (GDDL…TVKV). Over residues 306–337 (GPVTQKTEPWSAGASANQTNPWGGTVAPSNIT) the composition is skewed to polar residues. 4 tandem repeats follow at residues 313–315 (EPW), 325–327 (NPW), 338–340 (DPW), and 352–354 (DPW). Residues 313–389 (EPWSAGASAN…SNAGKTTDAW (77 aa)) form a 6 X 3 AA repeats of [DE]-P-W region. Polar residues predominate over residues 358–367 (TTASTQSVPK). Residues 370–372 (DPW) form repeat 5. The segment covering 374–384 (ASQQPASNAGK) has biased composition (polar residues). Copy 6 of the repeat occupies 387–389 (DAW). Ser-443 is subject to Phosphoserine. Positions 449 to 460 (SQSLTSASSKPS) are enriched in low complexity. At Thr-465 the chain carries Phosphothreonine. Repeat copies occupy residues 494-496 (NPF) and 508-510 (NPF). The 3 X 3 AA repeats of N-P-F stretch occupies residues 494-593 (NPFLAPGAAA…AQSTGTTNPF (100 aa)). Ser-526 carries the post-translational modification Phosphoserine. Repeat 3 spans residues 591-593 (NPF).

Belongs to the epsin family. As to quaternary structure, binds EPS15, AP-2 and clathrin. Interacts with UBQLN2. Interacts with ITSN1. Ubiquitinated.

The protein resides in the cytoplasm. Functionally, plays a role in the formation of clathrin-coated invaginations and endocytosis. This chain is Epsin-2 (Epn2), found in Mus musculus (Mouse).